The following is a 116-amino-acid chain: MTEQAEDALPIRFTDAAASKVKTLLEEEENDALKLRVYVTGGGCSGFQYGFTFDEKINEGDYTVEKQGVQLVVDPMSLQYLVGGEVDYTSGLEGSRFFVKNPNATTTCGCGASFSV.

Iron-sulfur cluster-binding residues include Cys-44, Cys-108, and Cys-110.

It belongs to the HesB/IscA family. As to quaternary structure, homodimer. Requires iron-sulfur cluster as cofactor.

In terms of biological role, required for insertion of 4Fe-4S clusters for at least IspG. This chain is Iron-sulfur cluster insertion protein ErpA, found in Shewanella halifaxensis (strain HAW-EB4).